Consider the following 101-residue polypeptide: Putative RNA-binding protein RbpA (101 aa).

The RRM domain maps to 2 to 79 (SIYVGNLSYD…RDLKVNKAKP (78 aa)). A compositionally biased stretch (basic and acidic residues) spans 73 to 83 (KVNKAKPRENR). The interval 73–101 (KVNKAKPRENRSGGGSFGGGRKSYGGSRY) is disordered. The segment covering 84-101 (SGGGSFGGGRKSYGGSRY) has biased composition (gly residues).

This Synechocystis sp. (strain ATCC 27184 / PCC 6803 / Kazusa) protein is Putative RNA-binding protein RbpA (rbpA).